The following is a 161-amino-acid chain: Protein translocase subunit SecE (161 aa).

Residues Met-1–Val-12 are compositionally biased toward acidic residues. The tract at residues Met-1 to Lys-80 is disordered. Residues Val-133–Thr-153 traverse the membrane as a helical segment.

This sequence belongs to the SecE/SEC61-gamma family. In terms of assembly, component of the Sec protein translocase complex. Heterotrimer consisting of SecY, SecE and SecG subunits. The heterotrimers can form oligomers, although 1 heterotrimer is thought to be able to translocate proteins. Interacts with the ribosome. Interacts with SecDF, and other proteins may be involved. Interacts with SecA.

It is found in the cell membrane. In terms of biological role, essential subunit of the Sec protein translocation channel SecYEG. Clamps together the 2 halves of SecY. May contact the channel plug during translocation. The chain is Protein translocase subunit SecE from Mycobacterium bovis (strain ATCC BAA-935 / AF2122/97).